The chain runs to 392 residues: Protein O-glucosyltransferase 1 (392 aa).

The first 23 residues, 1–23 (MELGVSSQLWLWLLLLLLPPVPG), serve as a signal peptide directing secretion. 4 disulfide bridges follow: C49–C56, C54–C357, C102–C108, and C263–C286. N53 is a glycosylation site (N-linked (GlcNAc...) asparagine). Residues 103-107 (MFPSR) are interaction with the consensus sequence C-X-S-X-[PA]-C in peptide substrates. D133 (proton donor/acceptor) is an active-site residue. The interval 172 to 178 (AVWPIYP) is interaction with the consensus sequence C-X-S-X-[PA]-C in peptide substrates. Residue Y177 coordinates UDP-alpha-D-glucose. N204 is a glycosylation site (N-linked (GlcNAc...) asparagine). Residues S212, R218, and 274–279 (VAASFR) each bind UDP-alpha-D-glucose. N373 carries an N-linked (GlcNAc...) asparagine glycan. A Prevents secretion from ER motif is present at residues 389 to 392 (KIEL).

It belongs to the glycosyltransferase 90 family.

The protein localises to the endoplasmic reticulum lumen. It catalyses the reaction L-seryl-[EGF-like domain protein] + UDP-alpha-D-xylose = 3-O-(beta-D-xylosyl)-L-seryl-[EGF-like domain protein] + UDP + H(+). It carries out the reaction L-seryl-[EGF-like domain protein] + UDP-alpha-D-glucose = 3-O-(beta-D-glucosyl)-L-seryl-[EGF-like domain protein] + UDP + H(+). Its pathway is protein modification; protein glycosylation. Its function is as follows. Dual specificity glycosyltransferase that catalyzes the transfer of glucose and xylose from UDP-glucose and UDP-xylose, respectively, to a serine residue found in the consensus sequence of C-X-S-X-P-C. Specifically targets extracellular EGF repeats of protein such as CRB2, F7, F9 and NOTCH2. Acts as a positive regulator of Notch signaling by mediating O-glucosylation of Notch, leading to regulate muscle development. Notch glucosylation does not affect Notch ligand binding. Required during early development to promote gastrulation: acts by mediating O-glucosylation of CRB2, which is required for CRB2 localization to the cell membrane. This is Protein O-glucosyltransferase 1 (POGLUT1) from Bos taurus (Bovine).